Consider the following 58-residue polypeptide: Teratocyte protein CftICK-III (58 aa).

A signal peptide spans M1 to A24. 3 disulfides stabilise this stretch: C27/C42, C34/C47, and C41/C55.

In terms of tissue distribution, abundantly expressed by teratocytes, which are extra-embryonic cells released by parasitoid wasps into their hosts during larval eclosion.

It is found in the secreted. In terms of biological role, this endoparasitoid wasp peptide has immununosuppressive and insecticidal activities. Suppress cellular immunity which is detectable as a reduction of hemocyte encapsulation in the host. In vivo, ingestion of this peptide (probably at excessive doses) increases larval mortality and reduces leaf consumption in both lepidopteran species D.saccharalis and S.frugiperda, which are permissive and non-permissive hosts for C.flavipes, respectively. The polypeptide is Teratocyte protein CftICK-III (Cotesia flavipes (Parasitic wasp)).